A 274-amino-acid chain; its full sequence is HTH-type transcriptional regulator GadX (274 aa).

An HTH araC/xylS-type domain is found at 145–242 (TRVCTVINNN…GMTPTEYQER (98 aa)). 2 consecutive DNA-binding regions (H-T-H motif) follow at residues 162–183 (ARIA…REEE) and 209–232 (IKRV…RNYY).

Homodimer.

Positively regulates the expression of about fifteen genes involved in acid resistance such as gadA, gadB and gadC. Depending on the conditions (growth phase and medium), can repress gadW. This is HTH-type transcriptional regulator GadX (gadX) from Shigella flexneri.